Here is a 564-residue protein sequence, read N- to C-terminus: MALTVFEHASALWYRLQGSVSLAVLSTLAVVIAGWYILSSISLYFSRRQFIALHGCKPIANRYPSKWFGINFILEAGRTYKERRYLDALTWNFRNIGYTHEVRALGGTSVWTVEPENIKAVLTSKFKDYSLGNRPAVMGPLLGRGVFVTDGEEWSHSRALLRPNFAKDQVADLSMIERHLQQLLKMIPDDGKAIDLNDLILSFTMDSSTEFLFGESTETLTSGINRQFSDAFAYSLHDISSGLRLGPWYKFRRTDPKAVQSHRICREYADKYVEKALEYRRNYIKSVEDGATDKPSIDGGDSRRTFLRELALATDDREKLRDELLSLLLAGRDTTASLIGSLLFSLAKKPECWEKVRSEIEETLHGDLPSYEQLRNFKYAKYCVNEALRLYPPVPNNAKIAIRDTVLPRGGGPEGRDPIIVPKDAPVIYTVYALHRRYDLFGDDADDFRPERWENQRYTWEFLPFNGGPRICLGQQYALVETLYVLVRFAQHFSKIESMDPEPWTESLALTVSSGNGVKVKLERGSSDVHGLSTQGVLIDYGGLFAPTQKVPGTGVTQISKGKA.

Residues 18 to 38 (GSVSLAVLSTLAVVIAGWYIL) form a helical membrane-spanning segment. Residue cysteine 472 coordinates heme.

This sequence belongs to the cytochrome P450 family. Heme serves as cofactor.

The protein resides in the membrane. The protein operates within mycotoxin biosynthesis. Cytochrome P450 monooxygenase; part of the gene cluster that mediates the biosynthesis of fusaridione A, a bright yellow trans-fused decalin-containing tetramic acid with antimicrobial activity. The PKS module of fsdS catalyzes the formation of the polyketide unit which is then conjugated to L-tyrosine by the condensation domain of the fsdS NRPS module. Activity of the Dieckmann cyclase domain (RED) results in release of the intermediate fusaridione A. The unstable pyrrolidinedione ring of fusaridione A is opened through a reverse-Dieckmann reaction to afford its ring-opened form. The chain is Cytochrome P450 monooxygenase fsdH from Fusarium heterosporum.